We begin with the raw amino-acid sequence, 381 residues long: Alkanesulfonate monooxygenase (381 aa).

Belongs to the SsuD family. Homotetramer.

The enzyme catalyses an alkanesulfonate + FMNH2 + O2 = an aldehyde + FMN + sulfite + H2O + 2 H(+). Functionally, catalyzes the desulfonation of aliphatic sulfonates. In Cronobacter sakazakii (strain ATCC BAA-894) (Enterobacter sakazakii), this protein is Alkanesulfonate monooxygenase.